Consider the following 471-residue polypeptide: MSQAYSSSQRVSSYRRTFGGAPSFPLGSPLSSPVFPRAGFGTKGSSSSVTSRVYQVSRTSGGAGGLGPLRASRLGATRVPSSSYGAGELLDFSLADAVNQEFLTTRTNEKVELQELNDRFANYIEKVRFLEQQNAALAAEVNRLKGREPTRVAEIYEEELRELRRQVEVLTNQRARVDVERDNLLDDLQRLKAKLQEEIQLKEEAENNLAAFRADVDAATLARIDLERRIESLNEEIAFLKKVHEEEIRELQAQLQEQQVQVEMDMSKPDLTAALRDIRAQYETIAAKNISEAEEWYKSKVSDLTQAANKNNDALRQAKQEMMEYRHQIQSYTCEIDALKGTNDSLMRQMRELEDRFASEASGYQDNIARLEEEIRHLKDEMARHLREYQDLLNVKMALDVEIATYRKLLEGEESRINLPIQTFSALNFRETSPEQRGSEVHTKKTVMIKTIETRDGEVVSEATQQQHEVL.

A head region spans residues 2–109 (SQAYSSSQRV…QEFLTTRTNE (108 aa)). Residue Ser7 is modified to Phosphoserine; by CDK1. At Ser12 the chain carries Phosphoserine; by AURKB. Arg16 is modified (omega-N-methylarginine). The residue at position 17 (Thr17) is a Phosphothreonine; by AURKB and ROCK1. The residue at position 28 (Ser28) is a Phosphoserine; by CDK1. Phosphoserine is present on Ser31. Ser32 carries the phosphoserine; by CDK1 modification. Arg37 is subject to Asymmetric dimethylarginine; alternate. Arg37 is subject to Omega-N-methylarginine; alternate. Ser45 carries the post-translational modification Phosphoserine. Arg58 is modified (ADP-ribosylarginine). Ser60 carries the post-translational modification Phosphoserine; by AURKB. Omega-N-methylarginine is present on Arg70. Thr77 is subject to Phosphothreonine; by ROCK1. Position 81 is a phosphoserine (Ser81). One can recognise an IF rod domain in the interval 109 to 417 (EKVELQELND…KLLEGEESRI (309 aa)). Residues 110-142 (KVELQELNDRFANYIEKVRFLEQQNAALAAEVN) form a coil 1A region. The tract at residues 143-152 (RLKGREPTRV) is linker 1. Residues 153 to 253 (AEIYEEELRE…HEEEIRELQA (101 aa)) are coil 1B. The tract at residues 254–269 (QLQEQQVQVEMDMSKP) is linker 12. Residues 269-416 (PDLTAALRDI…RKLLEGEESR (148 aa)) are interaction with NEB. A coil 2A region spans residues 270 to 288 (DLTAALRDIRAQYETIAAK). The linker 2 stretch occupies residues 289-296 (NISEAEEW). A phosphoserine mark is found at Ser291, Ser359, Ser362, and Ser425. A coil 2B region spans residues 297–413 (YKSKVSDLTQ…ATYRKLLEGE (117 aa)). The segment at 414-471 (ESRINLPIQTFSALNFRETSPEQRGSEVHTKKTVMIKTIETRDGEVVSEATQQQHEVL) is tail. The tract at residues 439–454 (SEVHTKKTVMIKTIET) is interaction with CRYAB.

Belongs to the intermediate filament family. In terms of assembly, homomer. Interacts with DST. Interacts with MTM1. Interacts with EPPK1; interaction is dependent of higher-order structure of intermediate filament. Interacts with CRYAB. Interacts with NEB (via nebulin repeats 160-164). Interacts (via rod region) with NEBL (via nebulin repeats 1-5). Interacts with ASB2; the interaction targets DES for proteasomal degradation. Interacts with PKP1. Interacts with FLII. In terms of processing, ADP-ribosylation prevents ability to form intermediate filaments. Phosphorylation at Ser-7, Ser-28 and Ser-32 by CDK1 and phosphorylation at Ser-60 by AURKB contribute to efficient separation of desmin intermediate filaments during mitosis. Post-translationally, ubiquitination by a SCF-like complex containing ASB2 leads to proteasomal degradation.

It localises to the cytoplasm. It is found in the myofibril. The protein localises to the sarcomere. The protein resides in the z line. Its subcellular location is the cell membrane. It localises to the sarcolemma. It is found in the nucleus. The protein localises to the cell tip. The protein resides in the nucleus envelope. Functionally, muscle-specific type III intermediate filament essential for proper muscular structure and function. Plays a crucial role in maintaining the structure of sarcomeres, inter-connecting the Z-disks and forming the myofibrils, linking them not only to the sarcolemmal cytoskeleton, but also to the nucleus and mitochondria, thus providing strength for the muscle fiber during activity. In adult striated muscle they form a fibrous network connecting myofibrils to each other and to the plasma membrane from the periphery of the Z-line structures. May act as a sarcomeric microtubule-anchoring protein: specifically associates with detyrosinated tubulin-alpha chains, leading to buckled microtubules and mechanical resistance to contraction. Required for nuclear membrane integrity, via anchoring at the cell tip and nuclear envelope, resulting in maintenance of microtubule-derived intracellular mechanical forces. Contributes to the transcriptional regulation of the NKX2-5 gene in cardiac progenitor cells during a short period of cardiomyogenesis and in cardiac side population stem cells in the adult. Plays a role in maintaining an optimal conformation of nebulette (NEB) on heart muscle sarcomeres to bind and recruit cardiac alpha-actin. The protein is Desmin (DES) of Sus scrofa (Pig).